The following is an 88-amino-acid chain: Homeobox protein knotted-1-like 11 (88 aa).

Residues 4-24 (ELKEMLLKKYSGCLSRLRSEF) enclose the ELK domain. Positions 25–88 (LKKRKKGKLP…NQRKRHWKPS (64 aa)) form a DNA-binding region, homeobox; TALE-type.

The protein belongs to the TALE/KNOX homeobox family.

Its subcellular location is the nucleus. Probably binds to the DNA sequence 5'-TGAC-3'. The sequence is that of Homeobox protein knotted-1-like 11 (KNOX11) from Zea mays (Maize).